Consider the following 279-residue polypeptide: NAD kinase (279 aa).

The active-site Proton acceptor is D61. NAD(+) contacts are provided by residues D61 to G62, N138 to D139, K149, K166, D168, and T179 to S184.

Belongs to the NAD kinase family. Requires a divalent metal cation as cofactor.

Its subcellular location is the cytoplasm. The enzyme catalyses NAD(+) + ATP = ADP + NADP(+) + H(+). In terms of biological role, involved in the regulation of the intracellular balance of NAD and NADP, and is a key enzyme in the biosynthesis of NADP. Catalyzes specifically the phosphorylation on 2'-hydroxyl of the adenosine moiety of NAD to yield NADP. The polypeptide is NAD kinase (Borreliella burgdorferi (strain ATCC 35210 / DSM 4680 / CIP 102532 / B31) (Borrelia burgdorferi)).